The following is a 997-amino-acid chain: Protein translocase subunit SecA (997 aa).

Residues Gln84, 102 to 106 (GEGKT), and Asp582 each bind ATP. The tract at residues 950 to 997 (PYVPVPEAKPEPSEVFGVERKRATPPPQPGLSRAERRRLMRQEKKRKK) is disordered. Positions 957-971 (AKPEPSEVFGVERKR) are enriched in basic and acidic residues. Over residues 984 to 997 (ERRRLMRQEKKRKK) the composition is skewed to basic residues.

It belongs to the SecA family. As to quaternary structure, monomer and homodimer. Part of the essential Sec protein translocation apparatus which comprises SecA, SecYEG and auxiliary proteins SecDF. Other proteins may also be involved.

The protein resides in the cell inner membrane. The protein localises to the cytoplasm. The enzyme catalyses ATP + H2O + cellular proteinSide 1 = ADP + phosphate + cellular proteinSide 2.. Functionally, part of the Sec protein translocase complex. Interacts with the SecYEG preprotein conducting channel. Has a central role in coupling the hydrolysis of ATP to the transfer of proteins into and across the cell membrane, serving as an ATP-driven molecular motor driving the stepwise translocation of polypeptide chains across the membrane. This chain is Protein translocase subunit SecA, found in Thermus thermophilus (strain ATCC BAA-163 / DSM 7039 / HB27).